The following is a 226-amino-acid chain: Protein Thf1 (226 aa).

Residues 183–213 (EEKMQKDLDLYRSNLEKMDQLLTVIEEALQA) are a coiled coil.

Belongs to the THF1 family.

May be involved in photosynthetic membrane biogenesis. In Gloeothece citriformis (strain PCC 7424) (Cyanothece sp. (strain PCC 7424)), this protein is Protein Thf1.